A 60-amino-acid polypeptide reads, in one-letter code: Large ribosomal subunit protein uL29 (60 aa).

The protein belongs to the universal ribosomal protein uL29 family.

The protein is Large ribosomal subunit protein uL29 of Fusobacterium nucleatum subsp. nucleatum (strain ATCC 25586 / DSM 15643 / BCRC 10681 / CIP 101130 / JCM 8532 / KCTC 2640 / LMG 13131 / VPI 4355).